The chain runs to 121 residues: Large ribosomal subunit protein bL12 (121 aa).

It belongs to the bacterial ribosomal protein bL12 family. As to quaternary structure, homodimer. Part of the ribosomal stalk of the 50S ribosomal subunit. Forms a multimeric L10(L12)X complex, where L10 forms an elongated spine to which 2 to 4 L12 dimers bind in a sequential fashion. Binds GTP-bound translation factors.

Functionally, forms part of the ribosomal stalk which helps the ribosome interact with GTP-bound translation factors. Is thus essential for accurate translation. The protein is Large ribosomal subunit protein bL12 of Lactococcus lactis subsp. lactis (strain IL1403) (Streptococcus lactis).